The primary structure comprises 208 residues: MLKKPIIIGVTGGSGGGKTSVSRAILNSFPNARIAMIQHDSYYKDQSHISFEERVKTNYDHPLAFDTDFMIQQLKELLAGRPVDIPIYDYKEHTRSNRTFRQEPQDVIIVEGILVLEDERLRELMDIKLFVDTDDDIRIIRRIQRDMVERGRSLESIIEQYTSVVKPMYHQFIEPSKRYADIVIPEGVSNVVAIDLINTKIASILGEL.

12 to 19 (GGSGGGKT) contacts ATP.

Belongs to the uridine kinase family.

It is found in the cytoplasm. The enzyme catalyses uridine + ATP = UMP + ADP + H(+). The catalysed reaction is cytidine + ATP = CMP + ADP + H(+). Its pathway is pyrimidine metabolism; CTP biosynthesis via salvage pathway; CTP from cytidine: step 1/3. It participates in pyrimidine metabolism; UMP biosynthesis via salvage pathway; UMP from uridine: step 1/1. In Streptococcus equi subsp. equi (strain 4047), this protein is Uridine kinase.